We begin with the raw amino-acid sequence, 784 residues long: Endonuclease MutS2 (784 aa).

Residue 335 to 342 (GPNTGGKT) coordinates ATP. Residues 709–784 (LDLRGERYED…GTGVTIVELK (76 aa)) form the Smr domain.

This sequence belongs to the DNA mismatch repair MutS family. MutS2 subfamily. In terms of assembly, homodimer. Binds to stalled ribosomes, contacting rRNA.

Its function is as follows. Endonuclease that is involved in the suppression of homologous recombination and thus may have a key role in the control of bacterial genetic diversity. Acts as a ribosome collision sensor, splitting the ribosome into its 2 subunits. Detects stalled/collided 70S ribosomes which it binds and splits by an ATP-hydrolysis driven conformational change. Acts upstream of the ribosome quality control system (RQC), a ribosome-associated complex that mediates the extraction of incompletely synthesized nascent chains from stalled ribosomes and their subsequent degradation. Probably generates substrates for RQC. This chain is Endonuclease MutS2, found in Geobacillus kaustophilus (strain HTA426).